The primary structure comprises 303 residues: Probable 5-dehydro-4-deoxyglucarate dehydratase (303 aa).

The protein belongs to the DapA family.

It carries out the reaction 5-dehydro-4-deoxy-D-glucarate + H(+) = 2,5-dioxopentanoate + CO2 + H2O. It functions in the pathway carbohydrate acid metabolism; D-glucarate degradation; 2,5-dioxopentanoate from D-glucarate: step 2/2. The polypeptide is Probable 5-dehydro-4-deoxyglucarate dehydratase (Variovorax paradoxus (strain S110)).